The primary structure comprises 54 residues: Ovomucoid (54 aa).

Residues 4–54 (VDCSDYPKPVCSLDYMPLCGSDNTTYNNKCIFCNAVVDSNGTITLSHFGKC) form the Kazal-like domain. 3 disulfide bridges follow: cysteine 6–cysteine 36, cysteine 14–cysteine 33, and cysteine 22–cysteine 54. N-linked (GlcNAc...) asparagine glycosylation occurs at asparagine 43.

Its subcellular location is the secreted. This chain is Ovomucoid, found in Haemorhous mexicanus (House finch).